The primary structure comprises 59 residues: Large ribosomal subunit protein bL33 (59 aa).

It belongs to the bacterial ribosomal protein bL33 family.

This chain is Large ribosomal subunit protein bL33, found in Borreliella afzelii (strain PKo) (Borrelia afzelii).